A 47-amino-acid polypeptide reads, in one-letter code: Delta-actitoxin-Aspp1a (47 aa).

3 disulfide bridges follow: Cys4-Cys44, Cys6-Cys34, and Cys27-Cys45.

It belongs to the sea anemone sodium channel inhibitory toxin family. Type I subfamily.

It is found in the secreted. The protein resides in the nematocyst. Its function is as follows. Binds specifically to voltage-gated sodium channels (Nav) (site 3), thereby delaying their inactivation during signal transduction. Has a heart stimulation effect on isolated rat atria that is higher than that of Hk7a, Hk8a and Hk16a. The protein is Delta-actitoxin-Aspp1a of Anthopleura sp. (strain 'Zhanjiang') (Sea anemone).